A 201-amino-acid chain; its full sequence is Protein CIMAP1C (201 aa).

Residues 171–186 (PAPTMSSRSGHTSPAR) form an STPGR repeat. Residues 172–201 (APTMSSRSGHTSPARLLSPWASSTRPTYAR) are disordered. Residues 191-201 (WASSTRPTYAR) show a composition bias toward polar residues.

It belongs to the CIMAP family.

In Bos taurus (Bovine), this protein is Protein CIMAP1C (CIMAP1C).